The chain runs to 366 residues: MNKVVLLCRPGFEKECAAEITDKAGKRELFGFARVKENTGYVIYECYQPEDGEKLISELPFSSLIFARQWFVVGELLQHLPPEDRITPIVGMLQGVVEKGGELRVEVADTNESKELMKFCRKFTVPLRAALRDAGVLTHYETPKRPVVHVFFIAPGCCYTGYSLAHNHSPFYMGIPRLKFPSDAPSRSTLKLEEALHVFIPEDEWDERLANGMYAVDLGACPGGWTYQLVKRNMWVYSVDNGPMAQSLMDTGQVTWLREDGFRYRPNRNNISWMVCDMVEKPAKVTALMAQWLVNGWCRETIFNLKLPMKKRYEEVSHNLAYLQAQLDEHGVNAQIQARQLYHDREEVTVHVRRLWAAVGGRRDER.

S-adenosyl-L-methionine-binding positions include serine 188, 221 to 224, aspartate 240, aspartate 260, and aspartate 277; that span reads CPGG. Catalysis depends on lysine 306, which acts as the Proton acceptor.

It belongs to the class I-like SAM-binding methyltransferase superfamily. RNA methyltransferase RlmE family. RlmM subfamily. In terms of assembly, monomer.

The protein localises to the cytoplasm. It carries out the reaction cytidine(2498) in 23S rRNA + S-adenosyl-L-methionine = 2'-O-methylcytidine(2498) in 23S rRNA + S-adenosyl-L-homocysteine + H(+). In terms of biological role, catalyzes the 2'-O-methylation at nucleotide C2498 in 23S rRNA. The protein is Ribosomal RNA large subunit methyltransferase M of Salmonella arizonae (strain ATCC BAA-731 / CDC346-86 / RSK2980).